Consider the following 172-residue polypeptide: NADH-ubiquinone oxidoreductase chain 6 (172 aa).

The next 5 membrane-spanning stretches (helical) occupy residues 1–21, 26–48, 52–74, 86–106, and 147–167; these read MTNY…GLAL, IYGG…GFGG, GLMV…TAMA, WFIF…FYLF, and CATW…FIII.

Belongs to the complex I subunit 6 family. Core subunit of respiratory chain NADH dehydrogenase (Complex I) which is composed of 45 different subunits.

Its subcellular location is the mitochondrion inner membrane. The enzyme catalyses a ubiquinone + NADH + 5 H(+)(in) = a ubiquinol + NAD(+) + 4 H(+)(out). Functionally, core subunit of the mitochondrial membrane respiratory chain NADH dehydrogenase (Complex I) which catalyzes electron transfer from NADH through the respiratory chain, using ubiquinone as an electron acceptor. Essential for the catalytic activity and assembly of complex I. The chain is NADH-ubiquinone oxidoreductase chain 6 from Rattus norvegicus (Rat).